We begin with the raw amino-acid sequence, 513 residues long: Cytochrome P450 1A2 (513 aa).

A glycan (O-linked (GlcNAc) serine) is linked at Ser68. Residue Phe225 participates in substrate binding. Position 456 (Cys456) interacts with heme.

The protein belongs to the cytochrome P450 family. As to quaternary structure, interacts with PGRMC1; the interaction requires PGRMC1 homodimerization. The cofactor is heme. In terms of tissue distribution, found in lung and liver.

It localises to the endoplasmic reticulum membrane. The protein resides in the microsome membrane. It catalyses the reaction an organic molecule + reduced [NADPH--hemoprotein reductase] + O2 = an alcohol + oxidized [NADPH--hemoprotein reductase] + H2O + H(+). The enzyme catalyses 17beta-estradiol + reduced [NADPH--hemoprotein reductase] + O2 = 2-hydroxy-17beta-estradiol + oxidized [NADPH--hemoprotein reductase] + H2O + H(+). The catalysed reaction is 17beta-estradiol + reduced [NADPH--hemoprotein reductase] + O2 = 4-hydroxy-17beta-estradiol + oxidized [NADPH--hemoprotein reductase] + H2O + H(+). It carries out the reaction estrone + reduced [NADPH--hemoprotein reductase] + O2 = 2-hydroxyestrone + oxidized [NADPH--hemoprotein reductase] + H2O + H(+). It catalyses the reaction estrone + reduced [NADPH--hemoprotein reductase] + O2 = 4-hydroxyestrone + oxidized [NADPH--hemoprotein reductase] + H2O + H(+). The enzyme catalyses cholesterol + reduced [NADPH--hemoprotein reductase] + O2 = 25-hydroxycholesterol + oxidized [NADPH--hemoprotein reductase] + H2O + H(+). The catalysed reaction is all-trans-retinol + reduced [NADPH--hemoprotein reductase] + O2 = all-trans-retinal + oxidized [NADPH--hemoprotein reductase] + 2 H2O + H(+). It carries out the reaction all-trans-retinal + reduced [NADPH--hemoprotein reductase] + O2 = all-trans-retinoate + oxidized [NADPH--hemoprotein reductase] + H2O + 2 H(+). It catalyses the reaction (5Z,8Z,11Z,14Z)-eicosatetraenoate + reduced [NADPH--hemoprotein reductase] + O2 = (14R,15S)-epoxy-(5Z,8Z,11Z)-eicosatrienoate + oxidized [NADPH--hemoprotein reductase] + H2O + H(+). The enzyme catalyses (5Z,8Z,11Z,14Z)-eicosatetraenoate + reduced [NADPH--hemoprotein reductase] + O2 = (14S,15R)-epoxy-(5Z,8Z,11Z)-eicosatrienoate + oxidized [NADPH--hemoprotein reductase] + H2O + H(+). The catalysed reaction is (5Z,8Z,11Z,14Z,17Z)-eicosapentaenoate + reduced [NADPH--hemoprotein reductase] + O2 = (17R,18S)-epoxy-(5Z,8Z,11Z,14Z)-eicosatetraenoate + oxidized [NADPH--hemoprotein reductase] + H2O + H(+). It carries out the reaction (4Z,7Z,10Z,13Z,16Z,19Z)-docosahexaenoate + reduced [NADPH--hemoprotein reductase] + O2 = (19R,20S)-epoxy-(4Z,7Z,10Z,13Z,16Z)-docosapentaenoate + oxidized [NADPH--hemoprotein reductase] + H2O + H(+). It catalyses the reaction (5S)-hydroperoxy-(6E,8Z,11Z,14Z)-eicosatetraenoate = 5-oxo-(6E,8Z,11Z,14Z)-eicosatetraenoate + H2O. The enzyme catalyses (12S)-hydroperoxy-(5Z,8Z,10E,14Z)-eicosatetraenoate = 12-oxo-(5Z,8Z,10E,14Z)-eicosatetraenoate + H2O. The catalysed reaction is (15S)-hydroperoxy-(5Z,8Z,11Z,13E)-eicosatetraenoate = 15-oxo-(5Z,8Z,11Z,13E)-eicosatetraenoate + H2O. It carries out the reaction (13S)-hydroperoxy-(9Z,11E)-octadecadienoate = 13-oxo-(9Z,11E)-octadecadienoate + H2O. It catalyses the reaction (5Z,8Z,11Z,14Z)-eicosatetraenoate + reduced [NADPH--hemoprotein reductase] + O2 = 13-hydroxy-(5Z,8Z,11Z,14Z)-eicosatetraenoate + oxidized [NADPH--hemoprotein reductase] + H2O + H(+). The enzyme catalyses (5Z,8Z,11Z,14Z)-eicosatetraenoate + reduced [NADPH--hemoprotein reductase] + O2 = 19-hydroxy-(5Z,8Z,11Z,14Z)-eicosatetraenoate + oxidized [NADPH--hemoprotein reductase] + H2O + H(+). The catalysed reaction is (9Z,12Z)-octadecadienoate + reduced [NADPH--hemoprotein reductase] + O2 = 11-hydroxy-(9Z,12Z)-octadecadienoate + oxidized [NADPH--hemoprotein reductase] + H2O + H(+). It participates in cofactor metabolism; retinol metabolism. Its pathway is steroid metabolism; cholesterol metabolism. The protein operates within lipid metabolism; arachidonate metabolism. Functionally, a cytochrome P450 monooxygenase involved in the metabolism of various endogenous substrates, including fatty acids, steroid hormones and vitamins. Mechanistically, uses molecular oxygen inserting one oxygen atom into a substrate, and reducing the second into a water molecule, with two electrons provided by NADPH via cytochrome P450 reductase (NADPH--hemoprotein reductase). Catalyzes the hydroxylation of carbon-hydrogen bonds. Exhibits high catalytic activity for the formation of hydroxyestrogens from estrone (E1) and 17beta-estradiol (E2), namely 2-hydroxy E1 and E2. Metabolizes cholesterol toward 25-hydroxycholesterol, a physiological regulator of cellular cholesterol homeostasis. May act as a major enzyme for all-trans retinoic acid biosynthesis in the liver. Catalyzes two successive oxidative transformation of all-trans retinol to all-trans retinal and then to the active form all-trans retinoic acid. Primarily catalyzes stereoselective epoxidation of the last double bond of polyunsaturated fatty acids (PUFA), displaying a strong preference for the (R,S) stereoisomer. Catalyzes bisallylic hydroxylation and omega-1 hydroxylation of PUFA. May also participate in eicosanoids metabolism by converting hydroperoxide species into oxo metabolites (lipoxygenase-like reaction, NADPH-independent). Plays a role in the oxidative metabolism of xenobiotics. Catalyzes the N-hydroxylation of heterocyclic amines and the O-deethylation of phenacetin. Metabolizes caffeine via N3-demethylation. The protein is Cytochrome P450 1A2 (CYP1A2) of Mesocricetus auratus (Golden hamster).